A 238-amino-acid chain; its full sequence is 5-amino-6-(5-phospho-D-ribitylamino)uracil phosphatase YigB (238 aa).

Residue aspartate 16 is the Nucleophile of the active site. The Mg(2+) site is built by aspartate 16, aspartate 18, and aspartate 188. 16 to 18 (DLD) is a binding site for substrate.

Belongs to the HAD-like hydrolase superfamily. Mg(2+) serves as cofactor. Mn(2+) is required as a cofactor. It depends on Co(2+) as a cofactor. The cofactor is Zn(2+).

The catalysed reaction is 5-amino-6-(5-phospho-D-ribitylamino)uracil + H2O = 5-amino-6-(D-ribitylamino)uracil + phosphate. Its pathway is cofactor biosynthesis; riboflavin biosynthesis; 5-amino-6-(D-ribitylamino)uracil from GTP: step 4/4. Its function is as follows. Catalyzes the dephosphorylation of 5-amino-6-(5-phospho-D-ribitylamino)uracil, and thus could be involved in the riboflavin biosynthesis pathway. Is also able to dephosphorylate flavin mononucleotide (FMN) and other phosphoric acid esters. YigB is important for the formation of dormant persister cells. The polypeptide is 5-amino-6-(5-phospho-D-ribitylamino)uracil phosphatase YigB (yigB) (Escherichia coli (strain K12)).